The sequence spans 245 residues: tRNA pseudouridine synthase A (245 aa).

Asp-52 serves as the catalytic Nucleophile. Tyr-110 provides a ligand contact to substrate.

This sequence belongs to the tRNA pseudouridine synthase TruA family. Homodimer.

The enzyme catalyses uridine(38/39/40) in tRNA = pseudouridine(38/39/40) in tRNA. In terms of biological role, formation of pseudouridine at positions 38, 39 and 40 in the anticodon stem and loop of transfer RNAs. In Pseudothermotoga lettingae (strain ATCC BAA-301 / DSM 14385 / NBRC 107922 / TMO) (Thermotoga lettingae), this protein is tRNA pseudouridine synthase A.